Consider the following 100-residue polypeptide: Urease subunit gamma (100 aa).

This sequence belongs to the urease gamma subunit family. Heterotrimer of UreA (gamma), UreB (beta) and UreC (alpha) subunits. Three heterotrimers associate to form the active enzyme.

The protein localises to the cytoplasm. The catalysed reaction is urea + 2 H2O + H(+) = hydrogencarbonate + 2 NH4(+). The protein operates within nitrogen metabolism; urea degradation; CO(2) and NH(3) from urea (urease route): step 1/1. The chain is Urease subunit gamma from Pseudomonas putida (strain ATCC 700007 / DSM 6899 / JCM 31910 / BCRC 17059 / LMG 24140 / F1).